The following is a 90-amino-acid chain: Small ribosomal subunit protein bS20 (90 aa).

Residues 1-11 (MANIKSSEKDI) show a composition bias toward basic and acidic residues. The tract at residues 1–29 (MANIKSSEKDIRRTKRRNAANSQNRSRLR) is disordered.

Belongs to the bacterial ribosomal protein bS20 family.

In terms of biological role, binds directly to 16S ribosomal RNA. This is Small ribosomal subunit protein bS20 from Leptospira borgpetersenii serovar Hardjo-bovis (strain JB197).